Here is a 411-residue protein sequence, read N- to C-terminus: Serine hydroxymethyltransferase (411 aa).

Residues Leu-117 and 121 to 123 each bind (6S)-5,6,7,8-tetrahydrofolate; that span reads GHL. The residue at position 226 (Lys-226) is an N6-(pyridoxal phosphate)lysine.

This sequence belongs to the SHMT family. As to quaternary structure, homodimer. Requires pyridoxal 5'-phosphate as cofactor.

The protein localises to the cytoplasm. The enzyme catalyses (6R)-5,10-methylene-5,6,7,8-tetrahydrofolate + glycine + H2O = (6S)-5,6,7,8-tetrahydrofolate + L-serine. The protein operates within one-carbon metabolism; tetrahydrofolate interconversion. It functions in the pathway amino-acid biosynthesis; glycine biosynthesis; glycine from L-serine: step 1/1. Its function is as follows. Catalyzes the reversible interconversion of serine and glycine with tetrahydrofolate (THF) serving as the one-carbon carrier. This reaction serves as the major source of one-carbon groups required for the biosynthesis of purines, thymidylate, methionine, and other important biomolecules. Also exhibits THF-independent aldolase activity toward beta-hydroxyamino acids, producing glycine and aldehydes, via a retro-aldol mechanism. This Syntrophobacter fumaroxidans (strain DSM 10017 / MPOB) protein is Serine hydroxymethyltransferase.